A 271-amino-acid polypeptide reads, in one-letter code: Fatty acid elongase 2 (271 aa).

Residues 16-36 (WMIDNVDVAGFLCLLYLGLVW) form a helical membrane-spanning segment. Residue asparagine 52 is glycosylated (N-linked (GlcNAc...) asparagine). A run of 2 helical transmembrane segments spans residues 59 to 79 (VFIM…IVVV) and 110 to 130 (FWVG…VLLV). A HxxHH motif motif is present at residues 140–144 (HWYHH). The Nucleophile role is filled by histidine 143. 3 helical membrane passes run 162–182 (IFVF…YFAM), 194–214 (IAPV…AVTM), and 241–261 (GVVM…ESYL).

This sequence belongs to the ELO family.

The protein localises to the endoplasmic reticulum membrane. The catalysed reaction is an acyl-CoA + malonyl-CoA + H(+) = a 3-oxoacyl-CoA + CO2 + CoA. It functions in the pathway lipid metabolism; fatty acid biosynthesis. Its function is as follows. Involved in the synthesis of fatty acids. Elongates C10 fatty acids to C14. This chain is Fatty acid elongase 2, found in Trypanosoma brucei brucei (strain 927/4 GUTat10.1).